We begin with the raw amino-acid sequence, 420 residues long: Serine hydroxymethyltransferase (420 aa).

(6S)-5,6,7,8-tetrahydrofolate-binding positions include Leu-123 and 127-129 (GHL). Lys-232 carries the post-translational modification N6-(pyridoxal phosphate)lysine. Position 357–359 (357–359 (SPF)) interacts with (6S)-5,6,7,8-tetrahydrofolate.

This sequence belongs to the SHMT family. Homodimer. It depends on pyridoxal 5'-phosphate as a cofactor.

It is found in the cytoplasm. It catalyses the reaction (6R)-5,10-methylene-5,6,7,8-tetrahydrofolate + glycine + H2O = (6S)-5,6,7,8-tetrahydrofolate + L-serine. Its pathway is one-carbon metabolism; tetrahydrofolate interconversion. It functions in the pathway amino-acid biosynthesis; glycine biosynthesis; glycine from L-serine: step 1/1. In terms of biological role, catalyzes the reversible interconversion of serine and glycine with tetrahydrofolate (THF) serving as the one-carbon carrier. This reaction serves as the major source of one-carbon groups required for the biosynthesis of purines, thymidylate, methionine, and other important biomolecules. Also exhibits THF-independent aldolase activity toward beta-hydroxyamino acids, producing glycine and aldehydes, via a retro-aldol mechanism. In Streptococcus pyogenes serotype M4 (strain MGAS10750), this protein is Serine hydroxymethyltransferase.